The chain runs to 217 residues: Putative oxidative stress regulator AosR (217 aa).

The short motif at 5 to 9 (CGRRC) is the CXXXC element. An intrachain disulfide couples cysteine 5 to cysteine 9.

It belongs to the AosR family.

The sequence is that of Putative oxidative stress regulator AosR from Mycobacterium leprae (strain TN).